The chain runs to 160 residues: Keratin-associated protein 13-4 (160 aa).

Tandem repeats lie at residues 41-50 (CQLRSSLYRD), 51-60 (CQKTCWEPAS), 61-70 (CQKSCYRPRT), and 77-86 (CQTTCSGSLG). The 4 X 10 AA approximate repeats stretch occupies residues 41-86 (CQLRSSLYRDCQKTCWEPASCQKSCYRPRTSILCCPCQTTCSGSLG).

Belongs to the PMG family. As to quaternary structure, interacts with hair keratins.

In the hair cortex, hair keratin intermediate filaments are embedded in an interfilamentous matrix, consisting of hair keratin-associated proteins (KRTAP), which are essential for the formation of a rigid and resistant hair shaft through their extensive disulfide bond cross-linking with abundant cysteine residues of hair keratins. The matrix proteins include the high-sulfur and high-glycine-tyrosine keratins. This chain is Keratin-associated protein 13-4 (KRTAP13-4), found in Homo sapiens (Human).